Reading from the N-terminus, the 445-residue chain is Fatty acid desaturase 3 (445 aa).

The segment at 1–21 (MGGVGEPGPREGPAQPGAPLP) is disordered. Over 1 to 133 (MGGVGEPGPR…DMKLFDASPT (133 aa)) the chain is Cytoplasmic. The Cytochrome b5 heme-binding domain maps to 20 to 97 (LPTFCWEQIR…LQPLLIGELA (78 aa)). Residues 134 to 154 (FFAFLLGHILAMEVLAWLLIY) traverse the membrane as a helical segment. Topologically, residues 155 to 159 (LLGPG) are lumenal. The chain crosses the membrane as a helical span at residues 160–180 (WVPSALAAFILAISQAQSWCL). Residues 181–263 (QHDLGHASIF…KRRYLPYNQQ (83 aa)) are Cytoplasmic-facing. The Histidine box-1 motif lies at 182 to 186 (HDLGH). Residues 219–223 (HFQHH) carry the Histidine box-2 motif. Residues 264–284 (HLYFFLIGPPLLTLVNFEVEN) form a helical membrane-spanning segment. The Lumenal segment spans residues 285–306 (LAYMLVCMQWADLLWAASFYAR). Residues 307–327 (FFLSYLPFYGVPGVLLFFVAV) traverse the membrane as a helical segment. Topologically, residues 328–445 (RVLESHWFVW…DIWLDAYLHQ (118 aa)) are cytoplasmic. The short motif at 383-387 (QIEHH) is the Histidine box-3 element.

This sequence belongs to the fatty acid desaturase type 1 family. As to expression, highly expressed in various organs and tissues including liver, kidney, brain, lung, pancreas, testis, ovary and skeletal muscle (at protein level).

The protein resides in the endoplasmic reticulum membrane. The enzyme catalyses an N-acylsphing-4-enine + 2 Fe(II)-[cytochrome b5] + O2 + 2 H(+) = an N-acyl-sphinga-4E,14Z-dienine + 2 Fe(III)-[cytochrome b5] + 2 H2O. It catalyses the reaction N-(hexanoyl)sphing-4-enine + 2 Fe(II)-[cytochrome b5] + O2 + 2 H(+) = N-hexanoyl-sphinga-4E,14Z-dienine + 2 Fe(III)-[cytochrome b5] + 2 H2O. The catalysed reaction is sphing-4-enine + 2 Fe(II)-[cytochrome b5] + O2 + 2 H(+) = sphinga-4E,14Z-dienine + 2 Fe(III)-[cytochrome b5] + 2 H2O. It carries out the reaction (11E)-octadecenoyl-CoA + 2 Fe(II)-[cytochrome b5] + O2 + 2 H(+) = (11E,13Z)-octadecadienoyl-CoA + 2 Fe(III)-[cytochrome b5] + 2 H2O. The enzyme catalyses N-acyl-1-deoxysphinganine + 2 Fe(II)-[cytochrome b5] + O2 + 2 H(+) = N-acyl-1-deoxysphing-14Z-enine + 2 Fe(III)-[cytochrome b5] + 2 H2O. It catalyses the reaction an N-acylsphinganine + 2 Fe(II)-[cytochrome b5] + O2 + 2 H(+) = an N-acylsphing-14Z-enine + 2 Fe(III)-[cytochrome b5] + 2 H2O. The protein operates within lipid metabolism; sphingolipid metabolism. It participates in lipid metabolism; polyunsaturated fatty acid biosynthesis. Mammals have different sphingoid bases that differ in their length and/or pattern of desaturation and hydroxyl groups. The predominant sphingoid base that comprises mammalian ceramides is sphing-4-enine (sphingosine or SPH) which has a trans (E) desaturation at carbon 4. FADS3 is a desaturase that introduces a cis (Z) double bond between carbon 14 and carbon 15 of the sphingoid base (also known as long chain base, LCB), producing LCBs such as sphinga-4,14-dienine (SPD, d18:2(4E,14Z)) from SPH. Prefers SPH-containing ceramides (N-acylsphing-4-enines) as substrates. Capable of metabolizing also the SPH in its free form. SPD ceramides occur widely in mammalian tissues and cells. Due to their unusual structure containing a cis double bond, SPD ceramides may have an opposite, negative role in lipid microdomain formation relative to conventional ceramides. Could be involved in the detoxification of 1-deoxy sphingolipids, by desaturating the cytotoxic 1-deoxysphinganine (1-deoxySA, m18:0), produced under pathological conditions, to 1-deoxysphingenine (1-deoxysphingosine, 1-deoxySO, m18:1). Although prefers SPH-containing ceramides (N-acylsphing-4-enines) as substrates, it also exhibits activity toward dihydrosphingosine-containing CERs (N-acylsphinganines) and produces 14Z-SPH-containing sphingolipids,which can be found in patients with DEGS1 mutations. Its desaturase mechanism involves an electron transfer facilitated by cytochrome b5. FADS3 also acts as a methyl-end fatty acyl coenzyme A (CoA) desaturase that introduces a cis double bond between the preexisting double bond and the terminal methyl group of the fatty acyl chain. Desaturates (11E)-octadecenoate (trans-vaccenoate, the predominant trans fatty acid in human milk) at carbon 13 to generate (11E,13Z)-octadecadienoate (also known as conjugated linoleic acid 11E,13Z-CLA). The polypeptide is Fatty acid desaturase 3 (Homo sapiens (Human)).